A 583-amino-acid chain; its full sequence is Ankyrin repeat-containing protein NPR4 (583 aa).

ANK repeat units lie at residues 68–97 (HNDT…AAVA), 119–148 (AGET…AEGV), 154–183 (SGYD…LLAK), 188–218 (ANTS…GLVE), 223–252 (NGKN…QLAR), 257–286 (KGQT…AIVM), and 291–321 (NGNT…HVNA). 4 helical membrane-spanning segments follow: residues 414–434 (VTVV…TVPG), 452–472 (IFFI…VVQI), 492–512 (LMWL…YIVL), and 518–538 (WAAL…LGTM).

The protein localises to the cell membrane. Its function is as follows. Involved in salt stress tolerance. This is Ankyrin repeat-containing protein NPR4 from Oryza sativa subsp. japonica (Rice).